Reading from the N-terminus, the 116-residue chain is FK506-binding protein 1 (116 aa).

A PPIase FKBP-type domain is found at 19–116 (GDKVSIHYTG…IFEVELLKIN (98 aa)).

Belongs to the FKBP-type PPIase family. FKBP1 subfamily.

The protein resides in the cytoplasm. It carries out the reaction [protein]-peptidylproline (omega=180) = [protein]-peptidylproline (omega=0). Its activity is regulated as follows. Inhibited by both FK506 and rapamycin. PPIases accelerate the folding of proteins. It catalyzes the cis-trans isomerization of proline imidic peptide bonds in oligopeptides. The sequence is that of FK506-binding protein 1 (fpr1) from Aspergillus oryzae (strain ATCC 42149 / RIB 40) (Yellow koji mold).